The primary structure comprises 1041 residues: FHIP family protein CG3558 (1041 aa).

Position 490 is a phosphoserine (Ser490). Disordered stretches follow at residues 619–648, 792–818, 858–879, 903–947, and 959–986; these read RPAD…SSSL, KGNE…QGQL, SMFS…SASS, DGRG…SNSS, and SNTT…SEPA. A compositionally biased stretch (polar residues) spans 628 to 637; the sequence is TDTTVATTAS. The residue at position 797 (Ser797) is a Phosphoserine. Over residues 800–818 the composition is skewed to polar residues; it reads HHSQQQQMVTNSGQQQGQL. A compositionally biased stretch (polar residues) spans 903–925; the sequence is DGRGISQAQTSAGTCETSLSTQP. Positions 927 to 947 are enriched in low complexity; the sequence is AGASRTGANATSTAASGSNSS. Positions 959–968 are enriched in polar residues; sequence SNTTTHSAST.

The protein belongs to the FHIP family.

In Drosophila melanogaster (Fruit fly), this protein is FHIP family protein CG3558.